Reading from the N-terminus, the 90-residue chain is Signal recognition particle 19 kDa protein (90 aa).

This sequence belongs to the SRP19 family. As to quaternary structure, part of the signal recognition particle protein translocation system, which is composed of SRP and FtsY. Archaeal SRP consists of a 7S RNA molecule of 300 nucleotides and two protein subunits: SRP54 and SRP19.

The protein resides in the cytoplasm. Its function is as follows. Involved in targeting and insertion of nascent membrane proteins into the cytoplasmic membrane. Binds directly to 7S RNA and mediates binding of the 54 kDa subunit of the SRP. The chain is Signal recognition particle 19 kDa protein from Methanococcus aeolicus (strain ATCC BAA-1280 / DSM 17508 / OCM 812 / Nankai-3).